Reading from the N-terminus, the 147-residue chain is Large ribosomal subunit protein uL13 (147 aa).

Residues 127–147 (GPEHPHSAQQPKVLEIQGAAR) form a disordered region.

The protein belongs to the universal ribosomal protein uL13 family. As to quaternary structure, part of the 50S ribosomal subunit.

This protein is one of the early assembly proteins of the 50S ribosomal subunit, although it is not seen to bind rRNA by itself. It is important during the early stages of 50S assembly. This Verminephrobacter eiseniae (strain EF01-2) protein is Large ribosomal subunit protein uL13.